The chain runs to 283 residues: E3 ubiquitin-protein ligase MARCHF5 (283 aa).

An RING-CH-type zinc finger spans residues 9-78 (VQQMLDRSCW…PQCNAEYLIV (70 aa)). The Zn(2+) site is built by Cys-17, Cys-20, Cys-36, Cys-38, His-46, Cys-49, Cys-68, and Cys-71. Helical transmembrane passes span 102 to 122 (FAAAGIMVGSIYWTAVTYGAV), 142 to 162 (PLFLLIGLPTIPVVLILGKMI), 212 to 232 (ILCGALVFPTIATIVGKLMFS), and 241 to 261 (TILGGIAFVAIKGAFKVYFKQ).

It is found in the mitochondrion outer membrane. The protein resides in the endoplasmic reticulum membrane. It carries out the reaction S-ubiquitinyl-[E2 ubiquitin-conjugating enzyme]-L-cysteine + [acceptor protein]-L-lysine = [E2 ubiquitin-conjugating enzyme]-L-cysteine + N(6)-ubiquitinyl-[acceptor protein]-L-lysine.. It participates in protein modification; protein ubiquitination. In terms of biological role, mitochondrial E3 ubiquitin-protein ligase that plays a crucial role in the control of mitochondrial morphology by acting as a positive regulator of mitochondrial fission. May play a role in the prevention of cell senescence acting as a regulator of mitochondrial quality control. The chain is E3 ubiquitin-protein ligase MARCHF5 (marchf5) from Xenopus laevis (African clawed frog).